Consider the following 189-residue polypeptide: UPF0149 protein VFMJ11_2207 (189 aa).

The protein belongs to the UPF0149 family.

This Aliivibrio fischeri (strain MJ11) (Vibrio fischeri) protein is UPF0149 protein VFMJ11_2207.